The chain runs to 2193 residues: MGAQVSTQKTGAHETGLSASGNSIIHYTNINYYKDAASNSANRQDFTQDPGKFTEPVKDIMIKSMPALNSPTAEECGYSDRVRSITLGNSTITTQECANVVVGYGTWPDYLHDDEATAEDQPTQPDVATCRFYTLESIQWQKTSDGWWWKFPEALKDMGLFGQNMHYHYLGRSGYTIHVQCNASKFHQGCLLVVCVPEAEMGCATVANEVNAAALSSGETAKHFAKTGATGTHTVQSIVTNAGMGVGVGNLTIFPHQWINLRTNNSATIVMPYINSVPMDNMFRHYNFTLMIIPFVPLDFTAEASTYVPITVTVAPMCAEYNGLRLASHQGLPTMNTPGSNQFLTSDDFQSPSAMPQFDVTPELRIPGEVKNLMEIAEVDSVVPVNNTQDSVYNMDVYKIPVSGGNQLSTQVFGFQMQPGLNSVFKRTLLGEILNYYAHWSGSVKLTFVFCGSAMALAKFLLAYSPPGADPPKSRKEAMLGTHVIWDIGLQSSCVLCVPWISQTHYRLVQQDEYTSAGYVTCWYQTSLVVPPGAPATCGVLCLASACNDFSVRMLRDTPFIEQKQLLQGDVEEAVNRAVARVADTLPTGPRNSESIPALTAAETGHTSQVVPGDTMQTRHVKNYHSRTESSVENFLCRAACVYITKYKTKDSDPVQRYANWRINTRQMVQLRRKFELFTYLRFDMEVTFVITSSQDDGTQLAQDMPVLTHQVMYIPPGGPVPNSVTDFAWQSSTNPSIFWTEGNAPARMSIPFISIGNAYSNFYDGWSHFTQDGVYGFNSLNNMGSIYIRHVNEQSPYAITSTVRVYFKPKHVRAWVPRPPRLCAYEKSSNVNFKPTDVTTSRTSITEVPSLRPSVVNTGAFGQQSGAAYVGNYRVVNRHLATHVDWQNCVWEDYNRDLLVSTTTAHGCDTIARCQCTTGVYFCASRNKHYPVSFEGPGLVEVQESEYYPRRYQSHVLLAAGFSEPGDCGGILRCEHGVIGLVTMGGEGVVGFADVRDLLWLEDDAMEQGVKDYVEQLGNAFGSGFTNQICEQVNLLKESLVGHDSILEKSLKALVKIISALVIVVRNHDDLITVTATLALIGCTSSPWRWLKHKVSQYYGIPMAERQSNGWLKKFTEMTNACKGMEWIAIKIQKFIEWLKLKILPEVKEKHEFLNRLKQLPLLESQIATIEQSAPSQSDQEQLFSNVQYFAHYCRKYAPLYAAEAKRVFSLEKKMSNYIQFKSKCRIEPVCLLLHGSPGAGKSVATSLIGRSLAEKLNSSVYSLPPDPDHFDGYKQQAVVIMDDLCQNPDGKDVSLFCQMVSSVDFVPPMAALEEKGILFTSPFVLASTNAGSINAPTVSDSRALARRFHFDMNIEVISMYSQNGKINMPMSVKTCDEECCPVNFKRCCPLVCGKAIQFIDRRTQVRYSLDMLVTEMFREYNHRHSVGATLEALFQGPPVIREIKISVAPETPPPPAIADLLKSVDSEAVREYCKEKGWLVPEVNSTLQIEKHVSRAFICLQALTTFVSVAGIIYIIYKLFAGFQGAYTGMPNQKPKVPTLRQAKVQGPAFEFAVAMMKRNASTVKTEYGEFTMLGIYDRWAVLPHHAKPGPTILMNDQEIGVLDAKELVDKDGTNLELTLLKLNRNEKFRDIRGFLAREEAEVNEAVLAINTSKFPNMYIPVGQVTDYGFLNLGGTPTKRMLMYNFPTRAGQCGGVLMSTGKVLGIHVGGNGHQGFSAALLRHYFNEEQGEIEFIESSKDAGFPVINTPSKTKLEPSVFHQVFEGNKEPAVLRNGDPRLKVNFEEAIFSKYIGNINTHVDEYMLEAVDHYAGQLATLDISTEPMKLEDAVYGTEGLEALDLTTSAGYPYVAIGIKKRDILSKKTKDLTKLKECMDKYGLNLPMVTYVKDELRSSEKVAKGKSRLIEASSLNDSVAMRQTFGNLYKTFHLNPGIVTGSAVGCDPDLFWSKIPVMLDGHLIAFDYSGYDASLSPVWFACLKLLLEKLGYTHRETNYIDYLCNSHHLYRDKHYFVRGGMPSGCSGTSIFNSMINNIIIRTLMLKVYKGIDLDQFRMIAYGDDVIASYPWPIDASLLAEAGKGYGLIMTPADKGECFNEVTWTNVTFLKRYFRADEQYPFLVHPVMPMKDIHESIRWTKDPKNTQDHVRSLCLLAWHNGEQEYEEFIRKIRSVPVGRCLTLPAFSTLRRKWLDSF.

The N-myristoyl glycine; by host moiety is linked to residue Gly2. The Cytoplasmic segment spans residues 2–1503 (GAQVSTQKTG…HVSRAFICLQ (1502 aa)). The tract at residues 565–582 (QLLQGDVEEAVNRAVARV) is amphipathic alpha-helix. Catalysis depends on for protease 2A activity residues His880 and Asp898. The Zn(2+) site is built by Cys915 and Cys917. The active-site For protease 2A activity is the Cys969. Cys975 and His977 together coordinate Zn(2+). Residues 1109–1181 (SNGWLKKFTE…EQSAPSQSDQ (73 aa)) are membrane-binding. The segment at 1109 to 1247 (SNGWLKKFTE…SPGAGKSVAT (139 aa)) is oligomerization. The RNA-binding stretch occupies residues 1130-1134 (AIKIQ). In terms of domain architecture, SF3 helicase spans 1213 to 1369 (EKKMSNYIQF…SMYSQNGKIN (157 aa)). Zn(2+) contacts are provided by Cys1377, Cys1389, and Cys1394. The segment at 1377 to 1394 (CDEECCPVNFKRCCPLVC) adopts a C4-type; degenerate zinc-finger fold. Positions 1421 to 1428 (EYNHRHSV) are RNA-binding. The interval 1432–1437 (LEALFQ) is oligomerization. Residues 1504–1519 (ALTTFVSVAGIIYIIY) lie within the membrane without spanning it. Residues 1520–2193 (KLFAGFQGAY…TLRRKWLDSF (674 aa)) are Cytoplasmic-facing. Residue Tyr1529 is modified to O-(5'-phospho-RNA)-tyrosine. The Peptidase C3 domain occupies 1549–1727 (GPAFEFAVAM…FSAALLRHYF (179 aa)). Active-site for protease 3C activity residues include His1588, Glu1619, and Cys1695. Residues 1958–2074 (GHLIAFDYSG…SYPWPIDASL (117 aa)) enclose the RdRp catalytic domain. Mg(2+) contacts are provided by Asp1964 and Asp2060.

The protein belongs to the picornaviruses polyprotein family. In terms of assembly, interacts with capsid protein VP1 and capsid protein VP3 to form heterotrimeric protomers. As to quaternary structure, interacts with capsid protein VP0, and capsid protein VP3 to form heterotrimeric protomers. Five protomers subsequently associate to form pentamers which serve as building blocks for the capsid. Interacts with capsid protein VP2, capsid protein VP3 and capsid protein VP4 following cleavage of capsid protein VP0. Interacts with capsid protein VP1 and capsid protein VP3 in the mature capsid. Interacts with host CD55; this interaction promotes virus attachment to the host cell and subsequent internalization. In terms of assembly, interacts with capsid protein VP0 and capsid protein VP1 to form heterotrimeric protomers. Five protomers subsequently associate to form pentamers which serve as building blocks for the capsid. Interacts with capsid protein VP4 in the mature capsid. Interacts with protein 2C; this interaction may be important for virion morphogenesis. Interacts with host CD55; this interaction promotes virus attachment to the host cell and subsequent internalization. As to quaternary structure, interacts with capsid protein VP1 and capsid protein VP3. Homodimer. In terms of assembly, homohexamer; forms a hexameric ring structure with 6-fold symmetry characteristic of AAA+ ATPases. Interacts (via N-terminus) with host RTN3 (via reticulon domain); this interaction is important for viral replication. Interacts with capsid protein VP3; this interaction may be important for virion morphogenesis. As to quaternary structure, interacts with protein 3CD. Homodimer. Interacts with host GBF1. Interacts (via GOLD domain) with host ACBD3 (via GOLD domain); this interaction allows the formation of a viral protein 3A/ACBD3 heterotetramer with a 2:2 stoichiometry, which will stimulate the recruitment of host PI4KB in order to synthesize PI4P at the viral RNA replication sites. In terms of assembly, interacts with RNA-directed RNA polymerase. As to quaternary structure, interacts with protein 3AB and with RNA-directed RNA polymerase. Interacts with Viral protein genome-linked and with protein 3CD. Requires Mg(2+) as cofactor. Post-translationally, specific enzymatic cleavages in vivo by the viral proteases yield processing intermediates and the mature proteins. Myristoylation is required for the formation of pentamers during virus assembly. Further assembly of 12 pentamers and a molecule of genomic RNA generates the provirion. In terms of processing, during virion maturation, immature virions are rendered infectious following cleavage of VP0 into VP4 and VP2. This maturation seems to be an autocatalytic event triggered by the presence of RNA in the capsid and it is followed by a conformational change infectious virion. Post-translationally, myristoylation is required during RNA encapsidation and formation of the mature virus particle. VPg is uridylylated by the polymerase into VPg-pUpU. This acts as a nucleotide-peptide primer for the genomic RNA replication.

It localises to the virion. Its subcellular location is the host cytoplasm. The protein localises to the host cytoplasmic vesicle membrane. The protein resides in the host nucleus. It catalyses the reaction a ribonucleoside 5'-triphosphate + H2O = a ribonucleoside 5'-diphosphate + phosphate + H(+). The enzyme catalyses Selective cleavage of Tyr-|-Gly bond in the picornavirus polyprotein.. The catalysed reaction is RNA(n) + a ribonucleoside 5'-triphosphate = RNA(n+1) + diphosphate. It carries out the reaction Selective cleavage of Gln-|-Gly bond in the poliovirus polyprotein. In other picornavirus reactions Glu may be substituted for Gln, and Ser or Thr for Gly.. Its activity is regulated as follows. Replication or transcription is subject to high level of random mutations by the nucleotide analog ribavirin. Forms an icosahedral capsid of pseudo T=3 symmetry with capsid proteins VP2 and VP3. The capsid is 300 Angstroms in diameter, composed of 60 copies of each capsid protein and enclosing the viral positive strand RNA genome. Capsid protein VP1 mainly forms the vertices of the capsid. Capsid protein VP1 interacts with host cell receptor to provide virion attachment to target host cells. This attachment induces virion internalization. Tyrosine kinases are probably involved in the entry process. After binding to its receptor, the capsid undergoes conformational changes. Capsid protein VP1 N-terminus (that contains an amphipathic alpha-helix) and capsid protein VP4 are externalized. Together, they shape a pore in the host membrane through which viral genome is translocated to host cell cytoplasm. Its function is as follows. Forms an icosahedral capsid of pseudo T=3 symmetry with capsid proteins VP2 and VP3. The capsid is 300 Angstroms in diameter, composed of 60 copies of each capsid protein and enclosing the viral positive strand RNA genome. In terms of biological role, lies on the inner surface of the capsid shell. After binding to the host receptor, the capsid undergoes conformational changes. Capsid protein VP4 is released, Capsid protein VP1 N-terminus is externalized, and together, they shape a pore in the host membrane through which the viral genome is translocated into the host cell cytoplasm. Functionally, component of immature procapsids, which is cleaved into capsid proteins VP4 and VP2 after maturation. Allows the capsid to remain inactive before the maturation step. Cysteine protease that cleaves viral polyprotein and specific host proteins. It is responsible for the autocatalytic cleavage between the P1 and P2 regions, which is the first cleavage occurring in the polyprotein. Also cleaves the host translation initiation factor EIF4G1, in order to shut down the capped cellular mRNA translation. Inhibits the host nucleus-cytoplasm protein and RNA trafficking by cleaving host members of the nuclear pores. Counteracts stress granule formation probably by antagonizing its assembly or promoting its dissassembly. Its function is as follows. Plays an essential role in the virus replication cycle by acting as a viroporin. Creates a pore in the host endoplasmic reticulum and as a consequence releases Ca2+ in the cytoplasm of infected cell. In turn, high levels of cytoplasmic calcium may trigger membrane trafficking and transport of viral ER-associated proteins to viroplasms, sites of viral genome replication. In terms of biological role, induces and associates with structural rearrangements of intracellular membranes. Displays RNA-binding, nucleotide binding and NTPase activities. May play a role in virion morphogenesis and viral RNA encapsidation by interacting with the capsid protein VP3. Functionally, localizes the viral replication complex to the surface of membranous vesicles. Together with protein 3CD binds the Cis-Active RNA Element (CRE) which is involved in RNA synthesis initiation. Acts as a cofactor to stimulate the activity of 3D polymerase, maybe through a nucleid acid chaperone activity. Localizes the viral replication complex to the surface of membranous vesicles. It inhibits host cell endoplasmic reticulum-to-Golgi apparatus transport and causes the disassembly of the Golgi complex, possibly through GBF1 interaction. This would result in depletion of MHC, trail receptors and IFN receptors at the host cell surface. Plays an essential role in viral RNA replication by recruiting ACBD3 and PI4KB at the viral replication sites, thereby allowing the formation of the rearranged membranous structures where viral replication takes place. Its function is as follows. Acts as a primer for viral RNA replication and remains covalently bound to viral genomic RNA. VPg is uridylylated prior to priming replication into VPg-pUpU. The oriI viral genomic sequence may act as a template for this. The VPg-pUpU is then used as primer on the genomic RNA poly(A) by the RNA-dependent RNA polymerase to replicate the viral genome. During genome replication, the VPg-RNA linkage is removed by the host TDP2, thereby accelerating replication. During the late stage of the replication cycle, host TDP2 is excluded from sites of viral RNA synthesis and encapsidation, allowing for the generation of progeny virions. In terms of biological role, involved in the viral replication complex and viral polypeptide maturation. It exhibits protease activity with a specificity and catalytic efficiency that is different from protease 3C. Protein 3CD lacks polymerase activity. Protein 3CD binds to the 5'UTR of the viral genome. Functionally, replicates the viral genomic RNA on the surface of intracellular membranes. May form linear arrays of subunits that propagate along a strong head-to-tail interaction called interface-I. Covalently attaches UMP to a tyrosine of VPg, which is used to prime RNA synthesis. The positive stranded RNA genome is first replicated at virus induced membranous vesicles, creating a dsRNA genomic replication form. This dsRNA is then used as template to synthesize positive stranded RNA genomes. ss(+)RNA genomes are either translated, replicated or encapsidated. Major viral protease that mediates proteolytic processing of the polyprotein. Cleaves host EIF5B, contributing to host translation shutoff. Also cleaves host PABPC1, contributing to host translation shutoff. Cleaves host NLRP1, triggers host N-glycine-mediated degradation of the autoinhibitory NLRP1 N-terminal fragment. In Echovirus 12 (strain Travis), this protein is Genome polyprotein.